The following is a 620-amino-acid chain: Glutathione-regulated potassium-efflux system protein KefC (620 aa).

12 helical membrane-spanning segments follow: residues 4–24 (HTLI…PIAV), 26–46 (LGLG…PWGL), 54–74 (SILH…GLEL), 90–110 (GALQ…LLGL), 114–134 (VAEL…MQAM), 149–169 (FAVL…IPLL), 178–198 (MGAF…VVLL), 218–238 (VFSA…EEVG), 270–290 (GLLL…GTLL), 294–314 (LRIV…LWLI), 327–347 (WFAV…GAAQ), and 359–379 (SLTL…VILN). Residues 399-518 (QPRVIIAGFG…AGVEKPERET (120 aa)) enclose the RCK N-terminal domain. Positions 597-620 (GWQGTEEGKHTGNMADEPETKPSS) are disordered.

Belongs to the monovalent cation:proton antiporter 2 (CPA2) transporter (TC 2.A.37) family. KefC subfamily. As to quaternary structure, homodimer. Interacts with the regulatory subunit KefF.

Its subcellular location is the cell inner membrane. Its function is as follows. Pore-forming subunit of a potassium efflux system that confers protection against electrophiles. Catalyzes K(+)/H(+) antiport. The sequence is that of Glutathione-regulated potassium-efflux system protein KefC from Escherichia coli (strain K12 / MC4100 / BW2952).